We begin with the raw amino-acid sequence, 108 residues long: Biogenesis of lysosome-related organelles complex 1 subunit CNL1 (108 aa).

Belongs to the BLOC1S4 family. As to quaternary structure, component of the biogenesis of lysosome-related organelles complex-1 (BLOC-1).

Its subcellular location is the cytoplasm. Its function is as follows. Component of the biogenesis of lysosome-related organelles complex-1 (BLOC-1), a complex that is involved in endosomal cargo sorting. The protein is Biogenesis of lysosome-related organelles complex 1 subunit CNL1 (CLN1) of Zygosaccharomyces rouxii (strain ATCC 2623 / CBS 732 / NBRC 1130 / NCYC 568 / NRRL Y-229).